Consider the following 63-residue polypeptide: Large ribosomal subunit protein uL29 (63 aa).

Belongs to the universal ribosomal protein uL29 family.

This chain is Large ribosomal subunit protein uL29, found in Alteromonas mediterranea (strain DSM 17117 / CIP 110805 / LMG 28347 / Deep ecotype).